Reading from the N-terminus, the 203-residue chain is Putative 3-methyladenine DNA glycosylase (203 aa).

This sequence belongs to the DNA glycosylase MPG family.

The sequence is that of Putative 3-methyladenine DNA glycosylase from Desulfitobacterium hafniense (strain Y51).